A 124-amino-acid polypeptide reads, in one-letter code: Small ribosomal subunit protein uS13 (124 aa).

The tract at residues 94–124 (KGLPVRGQRTKTNARTRKGPKRTVAGKKKAR) is disordered.

It belongs to the universal ribosomal protein uS13 family. As to quaternary structure, part of the 30S ribosomal subunit. Forms a loose heterodimer with protein S19. Forms two bridges to the 50S subunit in the 70S ribosome.

Functionally, located at the top of the head of the 30S subunit, it contacts several helices of the 16S rRNA. In the 70S ribosome it contacts the 23S rRNA (bridge B1a) and protein L5 of the 50S subunit (bridge B1b), connecting the 2 subunits; these bridges are implicated in subunit movement. Contacts the tRNAs in the A and P-sites. This chain is Small ribosomal subunit protein uS13, found in Pseudarthrobacter chlorophenolicus (strain ATCC 700700 / DSM 12829 / CIP 107037 / JCM 12360 / KCTC 9906 / NCIMB 13794 / A6) (Arthrobacter chlorophenolicus).